The sequence spans 686 residues: Phosphatidylinositol 4,5-bisphosphate-binding protein SLM1 (686 aa).

The tract at residues 33–147 (RSMTSADHAN…KQLQGKNSLT (115 aa)) is disordered. Low complexity predominate over residues 45-63 (QQQQQQQQQQQQQQQQQQQ). Polar residues predominate over residues 64 to 126 (SASFQNGSLT…PNIDSNTNVT (63 aa)). Over residues 133–144 (NNNNGKQLQGKN) the composition is skewed to low complexity. Residues Ser145, Ser150, and Ser153 each carry the phosphoserine modification. Over residues 157-172 (SSLQRQRLAQQQQQQQ) the composition is skewed to low complexity. Residues 157-176 (SSLQRQRLAQQQQQQQDPRS) are disordered. Residues 296 to 381 (RLEDLRRDLI…FLHEAFDNLE (86 aa)) are a coiled coil. Residues 468-581 (YEIKSGFLER…WFDNLKILTS (114 aa)) form the PH domain. Positions 626–669 (VENDENDDINSNYVGSTVTPKLDNQTNTNTSMSSLPDTNDSELQ) are disordered. Polar residues predominate over residues 634-663 (INSNYVGSTVTPKLDNQTNTNTSMSSLPDT). The short motif at 673 to 678 (PNIYIQ) is the PXIXIT-like, required for interaction with CNA1 and CNA2, and calcineurin-dependent dephosphorylation element.

As to quaternary structure, heterodimer of SLM1-SLM2. Binds phosphatidylinositol 4,5-bisphosphate, which is required for function. Interacts with the TORC2 subunits AVO2, BIT61 and TOR2. Interacts with the calcineurin catalytic subunits CNA1 and CNA2. In terms of processing, phosphorylated by the target of rapamycin complex 2 (TORC2) and dephosphorylated by serine/threonine-protein phosphatase 2B (calcineurin). Dephosphorylated in response to the disruption or inhibition of sphingolipid synthesis.

The protein resides in the cell membrane. Together with SLM2, acts as an effector of the TORC2- and calcineurin-signaling pathways. Phosphorylated and activated by TORC2 under favorable growth conditions. Mediates actin polarization via inhibition of calcineurin-dependent transcription. Upon nutrient limitation or environmental stress, gets dephosphorylated by calcineurin. Dephosphorylation inhibits its interaction with TORC2, thereby antagonizing TORC2 signaling and mediating calcineurin-dependent actin depolarization. May play a role in the response to the disruption of sphingolipid synthesis, where dephosphorylation of SLM1 leads to the activation and phosphorylation of YPK1 through the TORC2 and PKH1 pathways, which in turn phosphorylates ORM1 and LAG1 to activate sphingolipid synthesis. Also functions in heat-induced, calcineurin-mediated uracil permease (FUR4) endocytosis. This Saccharomyces cerevisiae (strain ATCC 204508 / S288c) (Baker's yeast) protein is Phosphatidylinositol 4,5-bisphosphate-binding protein SLM1 (SLM1).